The chain runs to 303 residues: sn-1-specific diacylglycerol lipase ABHD11 (303 aa).

Residues 1–22 constitute a mitochondrion transit peptide; sequence MLRWTRAWTAPYRGIGLSNSSF. In terms of domain architecture, AB hydrolase-1 spans 55–290; the sequence is PALVFLHGLF…NAGHWVHSDR (236 aa). Lysine 75 carries the post-translational modification N6-succinyllysine. Catalysis depends on charge relay system residues serine 129, aspartate 225, and histidine 284.

Belongs to the AB hydrolase superfamily. As to quaternary structure, interacts with OGDH and DLST; this interaction maintains the functional lipoylation of the 2-oxoglutarate dehydrogenase complex. Phosphorylated.

The protein localises to the mitochondrion. It is found in the mitochondrion matrix. The enzyme catalyses a 1,3-diacyl-sn-glycerol + H2O = a 1-acyl-sn-glycerol + a fatty acid + H(+). It catalyses the reaction 1-octadecanoyl-2-(9Z-octadecenoyl)-sn-glycerol + H2O = 2-(9Z-octadecenoyl)-glycerol + octadecanoate + H(+). The catalysed reaction is 1-octadecanoyl-2-(4Z,7Z,10Z,13Z,16Z,19Z-docosahexaenoyl)-sn-glycerol + H2O = 2-(4Z,7Z,10Z,13Z,16Z,19Z-docosahexaenoyl)-glycerol + octadecanoate + H(+). It carries out the reaction a 1,2-diacyl-sn-glycerol + H2O = a 2-acylglycerol + a fatty acid + H(+). The enzyme catalyses 1,2-didecanoylglycerol + H2O = decanoylglycerol + decanoate + H(+). It catalyses the reaction 1-octadecanoyl-2-(5Z,8Z,11Z,14Z-eicosatetraenoyl)-sn-glycerol + H2O = 2-(5Z,8Z,11Z,14Z-eicosatetraenoyl)-glycerol + octadecanoate + H(+). The diacylglycerol lipase activity can be modulated by phosphorylation by cAMP-dependent protein kinase. Functionally, catalyzes the hydrolysis of diacylglycerol in vitro and may function as a key regulator in lipid metabolism, namely by regulating the intracellular levels of diacylglycerol. 1,2-diacyl-sn-glycerols are the preferred substrate over 1,3-diacyl-sn-glycerols. The enzyme hydrolyzes stearate in preference to palmitate from the sn-1 position of 1,2-diacyl-sn-glycerols. Maintains the functional lipoylation of the 2-oxoglutarate dehydrogenase complex (OGDHc) through its interaction with the OGDHc by preventing the formation of lipoyl adducts. In addition, is also required for the expansion and differentiation of embryonic stem cells (ESCs). This is sn-1-specific diacylglycerol lipase ABHD11 from Bos taurus (Bovine).